The following is a 241-amino-acid chain: Ribonuclease 3 (241 aa).

The 129-residue stretch at 16–144 (HAEFEKKINY…VIGAIFQDGG (129 aa)) folds into the RNase III domain. Residue glutamate 57 participates in Mg(2+) binding. Residues aspartate 61 and glutamate 133 contribute to the active site. Glutamate 133 provides a ligand contact to Mg(2+). Residues 171-240 (DAKSRLQEIL…AALAIKKIES (70 aa)) enclose the DRBM domain.

The protein belongs to the ribonuclease III family. As to quaternary structure, homodimer. Mg(2+) serves as cofactor.

The protein localises to the cytoplasm. The enzyme catalyses Endonucleolytic cleavage to 5'-phosphomonoester.. Digests double-stranded RNA. Involved in the processing of primary rRNA transcript to yield the immediate precursors to the large and small rRNAs (23S and 16S). Processes some mRNAs, and tRNAs when they are encoded in the rRNA operon. Processes pre-crRNA and tracrRNA of type II CRISPR loci if present in the organism. This is Ribonuclease 3 from Desulfotalea psychrophila (strain LSv54 / DSM 12343).